We begin with the raw amino-acid sequence, 345 residues long: 4-hydroxy-2-oxovalerate aldolase (345 aa).

The Pyruvate carboxyltransferase domain maps to Ile-8–Gln-260. Arg-16–Asp-17 provides a ligand contact to substrate. Asp-17 contributes to the Mn(2+) binding site. His-20 (proton acceptor) is an active-site residue. Positions 170 and 199 each coordinate substrate. Positions 199 and 201 each coordinate Mn(2+). Position 290 (Tyr-290) interacts with substrate.

It belongs to the 4-hydroxy-2-oxovalerate aldolase family.

The enzyme catalyses (S)-4-hydroxy-2-oxopentanoate = acetaldehyde + pyruvate. This is 4-hydroxy-2-oxovalerate aldolase from Leptothrix cholodnii (strain ATCC 51168 / LMG 8142 / SP-6) (Leptothrix discophora (strain SP-6)).